Here is a 62-residue protein sequence, read N- to C-terminus: UPF0434 protein RHE_CH03977 (62 aa).

It belongs to the UPF0434 family.

In Rhizobium etli (strain ATCC 51251 / DSM 11541 / JCM 21823 / NBRC 15573 / CFN 42), this protein is UPF0434 protein RHE_CH03977.